Here is a 437-residue protein sequence, read N- to C-terminus: Glutamate-1-semialdehyde 2,1-aminomutase (437 aa).

Lys274 is modified (N6-(pyridoxal phosphate)lysine).

It belongs to the class-III pyridoxal-phosphate-dependent aminotransferase family. HemL subfamily. Homodimer. Pyridoxal 5'-phosphate serves as cofactor.

The protein localises to the cytoplasm. The enzyme catalyses (S)-4-amino-5-oxopentanoate = 5-aminolevulinate. It participates in porphyrin-containing compound metabolism; protoporphyrin-IX biosynthesis; 5-aminolevulinate from L-glutamyl-tRNA(Glu): step 2/2. In Paracidovorax citrulli (strain AAC00-1) (Acidovorax citrulli), this protein is Glutamate-1-semialdehyde 2,1-aminomutase.